We begin with the raw amino-acid sequence, 121 residues long: Large ribosomal subunit protein uL14 (121 aa).

Belongs to the universal ribosomal protein uL14 family. Part of the 50S ribosomal subunit. Forms a cluster with proteins L3 and L19. In the 70S ribosome, L14 and L19 interact and together make contacts with the 16S rRNA in bridges B5 and B8.

Its function is as follows. Binds to 23S rRNA. Forms part of two intersubunit bridges in the 70S ribosome. This chain is Large ribosomal subunit protein uL14, found in Prochlorococcus marinus (strain NATL1A).